We begin with the raw amino-acid sequence, 217 residues long: Putative thymidylate synthase (217 aa).

C139 is an active-site residue.

This sequence belongs to the thymidylate synthase family. Archaeal-type ThyA subfamily. In terms of assembly, monomer.

Its subcellular location is the cytoplasm. The protein operates within pyrimidine metabolism; dTTP biosynthesis. Its function is as follows. May catalyze the biosynthesis of dTMP using an unknown cosubstrate. The polypeptide is Putative thymidylate synthase (Methanococcoides burtonii (strain DSM 6242 / NBRC 107633 / OCM 468 / ACE-M)).